Reading from the N-terminus, the 456-residue chain is Phosphomannomutase (456 aa).

S98 functions as the Phosphoserine intermediate in the catalytic mechanism. S98, D245, D247, and D249 together coordinate Mg(2+).

Belongs to the phosphohexose mutase family. It depends on Mg(2+) as a cofactor.

It catalyses the reaction alpha-D-mannose 1-phosphate = D-mannose 6-phosphate. It functions in the pathway nucleotide-sugar biosynthesis; GDP-alpha-D-mannose biosynthesis; alpha-D-mannose 1-phosphate from D-fructose 6-phosphate: step 2/2. The protein operates within bacterial outer membrane biogenesis; LPS O-antigen biosynthesis. In terms of biological role, involved in GDP-mannose biosynthesis which serves as the activated sugar nucleotide precursor for mannose residues in cell surface polysaccharides. This enzyme participates in synthesis of the LPS O antigen. This is Phosphomannomutase (manB) from Salmonella montevideo.